The primary structure comprises 420 residues: Glycogen synthase kinase-3 beta (420 aa).

A compositionally biased stretch (polar residues) spans 1 to 24 (MSGRPRTTSFAESCKPVQQPSSFG). A disordered region spans residues 1–50 (MSGRPRTTSFAESCKPVQQPSSFGSMKVSRDKDGSKVTTVVATPGQGPDR). The region spanning 56–340 (YTDTKVIGNG…PLDACAHSFF (285 aa)) is the Protein kinase domain. Residues 62-70 (IGNGSFGVV) and lysine 85 each bind ATP. The Proton acceptor role is filled by aspartate 181. Positions 384–420 (NQAAVSTTSNTTSTSDSNTGERGSTNNAASASASNSS) are disordered. Composition is skewed to low complexity over residues 389-401 (STTS…SDSN) and 409-420 (NNAASASASNSS).

This sequence belongs to the protein kinase superfamily. CMGC Ser/Thr protein kinase family. GSK-3 subfamily. Phosphorylated. Activated by phosphorylation at Tyr-216.

It localises to the cytoplasm. Its subcellular location is the nucleus. The protein resides in the cell membrane. The enzyme catalyses L-seryl-[tau protein] + ATP = O-phospho-L-seryl-[tau protein] + ADP + H(+). It catalyses the reaction L-threonyl-[tau protein] + ATP = O-phospho-L-threonyl-[tau protein] + ADP + H(+). Plays a role in the organization of the formation of the main body axis of developing embryo. Acts as an inhibitor of differentiation of primary neurons. Inhibits the ability of ectopically expressed NEUROD1 and other bHLH factors to promote early retinal cell differentiation. May participate in the Wnt signaling pathway. May regulate the circadian clock via phosphorylation of the major clock components. This chain is Glycogen synthase kinase-3 beta (gsk3b), found in Xenopus laevis (African clawed frog).